A 313-amino-acid polypeptide reads, in one-letter code: Probable 5-dehydro-4-deoxyglucarate dehydratase 1 (313 aa).

Belongs to the DapA family.

The enzyme catalyses 5-dehydro-4-deoxy-D-glucarate + H(+) = 2,5-dioxopentanoate + CO2 + H2O. It participates in carbohydrate acid metabolism; D-glucarate degradation; 2,5-dioxopentanoate from D-glucarate: step 2/2. In Streptomyces avermitilis (strain ATCC 31267 / DSM 46492 / JCM 5070 / NBRC 14893 / NCIMB 12804 / NRRL 8165 / MA-4680), this protein is Probable 5-dehydro-4-deoxyglucarate dehydratase 1.